A 570-amino-acid chain; its full sequence is Potassium-transporting ATPase potassium-binding subunit (570 aa).

Helical transmembrane passes span 7-27 (AEIA…GVFL), 65-85 (AYAL…YAVL), 95-115 (PQGF…SFIT), 135-155 (LVLT…AAAL), 179-199 (LYLL…LGLP), 254-274 (LTNL…FFAF), 286-306 (ALVI…YATE), 383-403 (GVAI…LMVG), 422-442 (ILAV…AAVL), 489-509 (LGIA…AIAG), and 528-548 (GGLF…LQFF).

This sequence belongs to the KdpA family. As to quaternary structure, the system is composed of three essential subunits: KdpA, KdpB and KdpC.

The protein resides in the cell inner membrane. Its function is as follows. Part of the high-affinity ATP-driven potassium transport (or Kdp) system, which catalyzes the hydrolysis of ATP coupled with the electrogenic transport of potassium into the cytoplasm. This subunit binds the periplasmic potassium ions and delivers the ions to the membrane domain of KdpB through an intramembrane tunnel. This is Potassium-transporting ATPase potassium-binding subunit from Caulobacter vibrioides (strain ATCC 19089 / CIP 103742 / CB 15) (Caulobacter crescentus).